The chain runs to 307 residues: Membrane protein insertase YidC 2 (307 aa).

The N-terminal stretch at 1–23 (MKLTLNRILFSGLALSILFTLTG) is a signal peptide. C24 carries the N-palmitoyl cysteine lipid modification. The S-diacylglycerol cysteine moiety is linked to residue C24. Helical transmembrane passes span 58 to 78 (LGYG…ILPL), 135 to 155 (LGGI…AMYF), 179 to 199 (VLTA…MMAV), 209 to 225 (TMMY…SFSL), and 231 to 251 (LYWL…TYLL). A disordered region spans residues 263–307 (YAKNPPKAYQSTSSRKDVTPSQNMEQANLPKKIKSNRNAGKQRKR). Polar residues predominate over residues 271–288 (YQSTSSRKDVTPSQNMEQ). Residues 293–307 (KKIKSNRNAGKQRKR) are compositionally biased toward basic residues.

The protein belongs to the OXA1/ALB3/YidC family. Type 2 subfamily.

It localises to the cell membrane. Functionally, required for the insertion and/or proper folding and/or complex formation of integral membrane proteins into the membrane. Involved in integration of membrane proteins that insert both dependently and independently of the Sec translocase complex, as well as at least some lipoproteins. In Streptococcus pyogenes serotype M3 (strain ATCC BAA-595 / MGAS315), this protein is Membrane protein insertase YidC 2.